Here is an 841-residue protein sequence, read N- to C-terminus: Nuclear RNA export factor 2 (841 aa).

The interval 1-285 is RNA-binding unit probably involved in Piwi-dependent recruitment and single-stranded RNA-PPNP complex formation; the sequence is MPNQMRVLDF…NFELVDGKPF (285 aa). LRR repeat units lie at residues 200–221, 224–245, and 249–270; these read RLNGFILSNNRIRDIRPLTLLA, DYALLDLRGNKIKSAERLCRAL, and RARELLLENNPIVKISNFPANI. The tract at residues 286 to 553 is necessary for silencing function; sequence NMLHKIFSPL…EYVRAVKEVF (268 aa). The 84-residue stretch at 325-408 folds into the RRM domain; it reads WHAFMIPDPS…IFRYYLRMNV (84 aa). 3 LRR repeats span residues 475–496, 500–521, and 524–545; these read TCSEIRLCHNKVLVLDGAHVLG, CLRAVDLSHNWVQDLSSIHSLG, and PLKSLVLHGNKLCRNYRLPSEY. The NTF2 domain occupies 585-758; the sequence is LVGAFLENYL…LKIANERLHI (174 aa). A TAP-C domain is found at 788–841; the sequence is DVKDHKLLLFQEVTGLISTWVTSIVEEADWDFERALKLFIQKNADHEIPDLAFA.

It belongs to the NXF family. In the ovaries, part of a complex composed of at least Panx, nxf2, piwi and Nxt1. The complex is knowns as Panx-induced cotranscriptional silencing (PICTS) complex, Panx-nxf2-dependent TAP/p15 silencing (Pandas complex), SFiNX (silencing factor interacting nuclear export variant) or piwi-Panx-nxf2-p15 (PPNP) complex. Interacts (via TAP-C domain) with Panx (via NIR region); the interaction is direct. Interacts (via NTF2 domain) with Nxt1; the interaction is direct and prevents Nxt1 binding to nucleoporins. Interacts with sbr/Nxf1. In terms of tissue distribution, expressed in female gonads (at protein level). Expressed ubiquitously.

It is found in the cytoplasm. It localises to the nucleus. Its subcellular location is the nucleoplasm. Its function is as follows. May be involved in the export of mRNA from the nucleus to the cytoplasm. In the ovaries, forms a complex with nxf2, piwi and Nxt1 which acts as effectors of cotranscriptional transposon silencing. On recruitment to a target transcript, interacts with single stranded RNA, thereby anchoring the complex via the nascent target transcript to chromatin and allowing Panx to recruit silencing effectors to establishing repressive heterochromatin at transposon loci. Does not affect piRNA biogenesis. The interaction with Panx stabilizes the nuclear protein complex. Does not bind nucleoporins, but regulates sbr/Nxf1 binding to nucleoporins and, indirectly, transposon exports. In Drosophila melanogaster (Fruit fly), this protein is Nuclear RNA export factor 2 (nxf2).